The primary structure comprises 798 residues: Integrin beta-1-B (798 aa).

An N-terminal signal peptide occupies residues 1 to 21 (MARYPVFTFVFLICLVLCTNA). At 22–727 (QQGGTECLKA…VKEPECPSGP (706 aa)) the chain is on the extracellular side. A PSI domain is found at 27–77 (ECLKANAKSCGECIQAGPNCGWCTKVDFLQEGEPTSARCDDLAALKTKGCP). 28 disulfides stabilise this stretch: cysteine 28/cysteine 46, cysteine 36/cysteine 464, cysteine 39/cysteine 65, cysteine 49/cysteine 76, cysteine 206/cysteine 212, cysteine 260/cysteine 300, cysteine 400/cysteine 414, cysteine 434/cysteine 462, cysteine 466/cysteine 486, cysteine 477/cysteine 489, cysteine 491/cysteine 500, cysteine 502/cysteine 533, cysteine 516/cysteine 531, cysteine 525/cysteine 536, cysteine 538/cysteine 553, cysteine 555/cysteine 576, cysteine 560/cysteine 574, cysteine 568/cysteine 579, cysteine 581/cysteine 590, cysteine 592/cysteine 615, cysteine 599/cysteine 613, cysteine 607/cysteine 618, cysteine 620/cysteine 630, cysteine 633/cysteine 636, cysteine 640/cysteine 691, cysteine 646/cysteine 665, cysteine 649/cysteine 661, and cysteine 699/cysteine 723. The segment at 77 to 106 (PEDDIQNPRGRKQKLKDIPITSKGKGERMD) is disordered. 2 N-linked (GlcNAc...) asparagine glycosylation sites follow: asparagine 109 and asparagine 131. The VWFA domain occupies 139-377 (DYPIDLYYLM…QLIIDSYNSL (239 aa)). Positions 151 and 153 each coordinate Mg(2+). Residues serine 153, aspartate 156, aspartate 157, and glutamate 188 each contribute to the Ca(2+) site. Residues asparagine 211 and asparagine 223 are each glycosylated (N-linked (GlcNAc...) asparagine). Ca(2+) is bound by residues asparagine 243, aspartate 245, proline 247, and glutamate 248. Residue glutamate 248 coordinates Mg(2+). N-linked (GlcNAc...) asparagine glycans are attached at residues asparagine 268 and asparagine 362. The N-linked (GlcNAc...) asparagine glycan is linked to asparagine 416. 4 I-EGF domains span residues 466–501 (CQDKGTPNSPECHFGNGTFECGACRCNEGRIGKECE), 502–554 (CSTD…KYCE), 555–591 (CDNFNCDRSNGLICGGKGVCKCRVCECFPNYSGSACD), and 592–631 (CSEDTSTCMAKNGQICNGRGICDCGRCKCTDPKFQGPTCE). Asparagine 481 carries N-linked (GlcNAc...) asparagine glycosylation. The N-linked (GlcNAc...) asparagine glycan is linked to asparagine 520. Asparagine 584 carries N-linked (GlcNAc...) asparagine glycosylation. Asparagine 669 carries an N-linked (GlcNAc...) asparagine glycan. The helical transmembrane segment at 728–751 (DIIPIVAGVVAGIVLIGLALLLIW) threads the bilayer. Residues 752–798 (KLLMIIHDRREFAKFEKEKMNAKWDTGENPIYKSAVATVVNPKYEGK) lie on the Cytoplasmic side of the membrane. Tyrosine 783 carries the phosphotyrosine modification.

It belongs to the integrin beta chain family. In terms of assembly, heterodimer of an alpha and a beta subunit.

The protein resides in the cell membrane. Its subcellular location is the cell projection. The protein localises to the invadopodium membrane. It is found in the ruffle membrane. It localises to the melanosome. The protein resides in the cleavage furrow. Its subcellular location is the lamellipodium. The protein localises to the ruffle. In terms of biological role, beta integrins associate with alpha subunits to form receptor complexes that recognize the sequence R-G-D in a wide array of ligands. May be involved in osteoblast compaction. May play role in myoblast differentiation and fusion during skeletal myogenesis. The polypeptide is Integrin beta-1-B (itgb1-b) (Xenopus laevis (African clawed frog)).